The sequence spans 304 residues: Nod factor export ATP-binding protein I (304 aa).

One can recognise an ABC transporter domain in the interval 6-236 (IDFRNVEKRF…EIGCDVIEIY (231 aa)). An ATP-binding site is contributed by 38–45 (GPNGAGKT).

It belongs to the ABC transporter superfamily. Lipooligosaccharide exporter (TC 3.A.1.102) family. The complex is composed of two ATP-binding proteins (NodI) and two transmembrane proteins (NodJ).

Its subcellular location is the cell inner membrane. Functionally, part of the ABC transporter complex NodIJ involved in the export of the nodulation factors (Nod factors), the bacterial signal molecules that induce symbiosis and subsequent nodulation induction. Nod factors are LCO (lipo-chitin oligosaccharide), a modified beta-1,4-linked N-acetylglucosamine oligosaccharide. This subunit is responsible for energy coupling to the transport system. The polypeptide is Nod factor export ATP-binding protein I (Burkholderia lata (strain ATCC 17760 / DSM 23089 / LMG 22485 / NCIMB 9086 / R18194 / 383)).